A 55-amino-acid polypeptide reads, in one-letter code: Large ribosomal subunit protein bL33 (55 aa).

The protein belongs to the bacterial ribosomal protein bL33 family.

This Deinococcus deserti (strain DSM 17065 / CIP 109153 / LMG 22923 / VCD115) protein is Large ribosomal subunit protein bL33.